The following is a 224-amino-acid chain: 7-cyano-7-deazaguanine synthase (224 aa).

An ATP-binding site is contributed by 8 to 18 (LSGGMDSAAVI). The Zn(2+) site is built by cysteine 186, cysteine 196, cysteine 199, and cysteine 202.

Belongs to the QueC family. Requires Zn(2+) as cofactor.

It catalyses the reaction 7-carboxy-7-deazaguanine + NH4(+) + ATP = 7-cyano-7-deazaguanine + ADP + phosphate + H2O + H(+). It functions in the pathway purine metabolism; 7-cyano-7-deazaguanine biosynthesis. Its function is as follows. Catalyzes the ATP-dependent conversion of 7-carboxy-7-deazaguanine (CDG) to 7-cyano-7-deazaguanine (preQ(0)). This Xanthomonas axonopodis pv. citri (strain 306) protein is 7-cyano-7-deazaguanine synthase.